The chain runs to 209 residues: High frequency lysogenization protein HflD homolog (209 aa).

Residues 79 to 121 (QGLNAELTRYTLSLMVLERKLNSAKGAMDTLGDRIAGLQRQLD) adopt a coiled-coil conformation.

This sequence belongs to the HflD family.

It is found in the cytoplasm. Its subcellular location is the cell inner membrane. The sequence is that of High frequency lysogenization protein HflD homolog from Enterobacter sp. (strain 638).